The primary structure comprises 169 residues: S-ribosylhomocysteine lyase (169 aa).

3 residues coordinate Fe cation: histidine 54, histidine 58, and cysteine 129.

The protein belongs to the LuxS family. In terms of assembly, homodimer. The cofactor is Fe cation.

It catalyses the reaction S-(5-deoxy-D-ribos-5-yl)-L-homocysteine = (S)-4,5-dihydroxypentane-2,3-dione + L-homocysteine. Involved in the synthesis of autoinducer 2 (AI-2) which is secreted by bacteria and is used to communicate both the cell density and the metabolic potential of the environment. The regulation of gene expression in response to changes in cell density is called quorum sensing. Catalyzes the transformation of S-ribosylhomocysteine (RHC) to homocysteine (HC) and 4,5-dihydroxy-2,3-pentadione (DPD). This chain is S-ribosylhomocysteine lyase, found in Glaesserella parasuis serovar 5 (strain SH0165) (Haemophilus parasuis).